A 3933-amino-acid polypeptide reads, in one-letter code: Circularly permutated Ras protein 2 (3933 aa).

Residues 12–46 (VHEVKKQELESILLQQEQEKQAKEEKESIKDTDDK) adopt a coiled-coil conformation. Disordered stretches follow at residues 23–101 (ILLQ…IEKK), 136–189 (DIRE…RKET), 1022–1054 (ITTTTTTTTTNNNNNNNEVGESTTPNLPITTTT), and 2817–2839 (NNNNNNNRYNTPVRNGNIGRPTR). Basic and acidic residues predominate over residues 28–62 (EQEKQAKEEKESIKDTDDKPIEDTEHSTNNDKPIE). Over residues 70–92 (TPTTTTTTKPTDEASSSSNNNNN) the composition is skewed to low complexity. Residues 136 to 145 (DIREPTDKPF) show a composition bias toward basic and acidic residues. Over residues 146–156 (ENTSNIETTRQ) the composition is skewed to polar residues. A coiled-coil region spans residues 167-215 (KTEAERLEQEQKQKQYDENRKETDRKLELELERLKNKKEEVEQIRAYFQ). The span at 168-189 (TEAERLEQEQKQKQYDENRKET) shows a compositional bias: basic and acidic residues. Over residues 2817 to 2826 (NNNNNNNRYN) the composition is skewed to low complexity. Residues 2853-2857 (DTAGQ), 2913-2916 (TKAD), and 2976-2983 (GDGGIGKS) each bind GTP. Disordered stretches follow at residues 3036-3086 (LQSA…LSSR), 3107-3142 (RKSSLVEEESKRQYDDDDESKSESSEYDDDDDQDYE), and 3733-3754 (VIEPSSNVDENSEKVETQPSSS). Residues 3070-3086 (PSSSSTRTSVSTSLSSR) show a composition bias toward low complexity. The segment covering 3107–3120 (RKSSLVEEESKRQY) has biased composition (basic and acidic residues). Over residues 3121-3141 (DDDDESKSESSEYDDDDDQDY) the composition is skewed to acidic residues.

It belongs to the small GTPase superfamily. CpRas family.

The sequence is that of Circularly permutated Ras protein 2 (cpras2) from Dictyostelium discoideum (Social amoeba).